The following is a 444-amino-acid chain: Glycogen synthase (444 aa).

Arginine 15 serves as a coordination point for ADP-alpha-D-glucose.

The protein belongs to the glycosyltransferase 1 family. Bacterial/plant glycogen synthase subfamily.

It catalyses the reaction [(1-&gt;4)-alpha-D-glucosyl](n) + ADP-alpha-D-glucose = [(1-&gt;4)-alpha-D-glucosyl](n+1) + ADP + H(+). It functions in the pathway glycan biosynthesis; glycogen biosynthesis. Synthesizes alpha-1,4-glucan chains using ADP-glucose. The sequence is that of Glycogen synthase from Deinococcus radiodurans (strain ATCC 13939 / DSM 20539 / JCM 16871 / CCUG 27074 / LMG 4051 / NBRC 15346 / NCIMB 9279 / VKM B-1422 / R1).